Reading from the N-terminus, the 350-residue chain is Phosphotriesterase-related protein (350 aa).

A divalent metal cation-binding residues include His-22, His-24, Glu-169, His-201, His-230, and Asp-298.

It belongs to the metallo-dependent hydrolases superfamily. Phosphotriesterase family. A divalent metal cation serves as cofactor.

The chain is Phosphotriesterase-related protein from Drosophila yakuba (Fruit fly).